The primary structure comprises 284 residues: Release factor glutamine methyltransferase (284 aa).

S-adenosyl-L-methionine-binding positions include 123–127 (GTGTG), D146, W174, and N189. 189–192 (NPPY) is a substrate binding site.

The protein belongs to the protein N5-glutamine methyltransferase family. PrmC subfamily.

It carries out the reaction L-glutaminyl-[peptide chain release factor] + S-adenosyl-L-methionine = N(5)-methyl-L-glutaminyl-[peptide chain release factor] + S-adenosyl-L-homocysteine + H(+). Methylates the class 1 translation termination release factors RF1/PrfA and RF2/PrfB on the glutamine residue of the universally conserved GGQ motif. In Francisella tularensis subsp. tularensis (strain SCHU S4 / Schu 4), this protein is Release factor glutamine methyltransferase.